Reading from the N-terminus, the 218-residue chain is Adenylate kinase (218 aa).

An ATP-binding site is contributed by 14–19; it reads GAGKGT. Residues 34 to 63 are NMP; it reads STGDMFRAAIKAGTELGKQAKALMDEGKLV. AMP-binding positions include T35, R40, 61 to 63, 89 to 92, and Q96; these read KLV and GFPR. The tract at residues 126–163 is LID; sequence GRRVHQASGRSYHIVYNPPKVEGKDDVTGEDLIIRADD. Residues R127 and 136–137 contribute to the ATP site; that span reads SY. AMP is bound by residues R160 and R171. Position 204 (K204) interacts with ATP.

It belongs to the adenylate kinase family. As to quaternary structure, monomer.

The protein resides in the cytoplasm. The enzyme catalyses AMP + ATP = 2 ADP. It functions in the pathway purine metabolism; AMP biosynthesis via salvage pathway; AMP from ADP: step 1/1. Catalyzes the reversible transfer of the terminal phosphate group between ATP and AMP. Plays an important role in cellular energy homeostasis and in adenine nucleotide metabolism. This is Adenylate kinase from Mannheimia succiniciproducens (strain KCTC 0769BP / MBEL55E).